The primary structure comprises 464 residues: IAA-amino acid hydrolase ILR1-like 6 (464 aa).

The N-terminal stretch at 1–24 (MDNLRKLNLLSVSLTIIFVSLTIA) is a signal peptide. C175, H177, E211, H235, and H433 together coordinate Mn(2+).

It belongs to the peptidase M20 family.

The enzyme catalyses a jasmonyl-L-amino acid + H2O = a jasmonate + an L-alpha-amino acid. Its function is as follows. Hydrolyzes certain amino acid conjugates of the plant growth regulator indole-3-acetic acid (IAA). Also hydrolyzes amino acid conjugates of jasmonic acid and 12-hydroxy jasmonic acid. The protein is IAA-amino acid hydrolase ILR1-like 6 of Arabidopsis thaliana (Mouse-ear cress).